A 483-amino-acid chain; its full sequence is Cysteine--tRNA ligase (483 aa).

Zn(2+) is bound at residue Cys-29. Positions 31–41 (ITVYDYCHLGH) match the 'HIGH' region motif. 3 residues coordinate Zn(2+): Cys-215, His-240, and Glu-244. The short motif at 272–276 (KMSKS) is the 'KMSKS' region element. Lys-275 contacts ATP.

Belongs to the class-I aminoacyl-tRNA synthetase family. In terms of assembly, monomer. Requires Zn(2+) as cofactor.

The protein resides in the cytoplasm. The catalysed reaction is tRNA(Cys) + L-cysteine + ATP = L-cysteinyl-tRNA(Cys) + AMP + diphosphate. This Synechocystis sp. (strain ATCC 27184 / PCC 6803 / Kazusa) protein is Cysteine--tRNA ligase (cysS).